Here is an 892-residue protein sequence, read N- to C-terminus: Zinc finger protein 473 homolog (892 aa).

In terms of domain architecture, KRAB spans 23 to 101 (ETLKDLAMDF…TKSSPLQSGF (79 aa)). 2 stretches are compositionally biased toward polar residues: residues 66–76 (DTSQPSLTSQP) and 84–97 (ATST…SSPL). Disordered stretches follow at residues 66-97 (DTSQ…SSPL) and 134-203 (GDPE…DSVQ). Composition is skewed to basic and acidic residues over residues 138 to 156 (SLPR…HQSP) and 190 to 203 (KESR…DSVQ). 2 C2H2-type zinc fingers span residues 209-231 (YKCS…WVLH) and 265-287 (YTCQ…QKIH). Positions 297-308 (SDSNLEGLSRSP) are enriched in polar residues. The interval 297-370 (SDSNLEGLSR…HPKPLRHQKT (74 aa)) is disordered. Composition is skewed to basic and acidic residues over residues 313–323 (GKQRLSKDTDS) and 332–353 (QDQE…ESQP). C2H2-type zinc fingers lie at residues 377–399 (FRCK…QRAH), 404–426 (YKCA…RKSH), 432–454 (CECQ…QAIH), 460–482 (YKCD…QRIH), 488–510 (HKCS…QRVH), 516–538 (HQCP…RLRH), 544–566 (FGCA…NKIH), and 572–594 (YECK…LSIH). Lysine 476 is covalently cross-linked (Glycyl lysine isopeptide (Lys-Gly) (interchain with G-Cter in SUMO2)). Residue lysine 602 forms a Glycyl lysine isopeptide (Lys-Gly) (interchain with G-Cter in SUMO2) linkage. A C2H2-type 11; degenerate zinc finger spans residues 697 to 719 (FKCDIYNRAFKQRAHLSKHQLIH). C2H2-type zinc fingers lie at residues 725–747 (FKCN…QKTH), 753–775 (FECS…QKIH), 781–803 (FKCG…QRIH), 809–831 (YVCQ…LRIH), 837–859 (YTCG…ERIH), and 865–887 (YACG…QRIH).

It belongs to the krueppel C2H2-type zinc-finger protein family. In terms of assembly, interacts with the SLBP/pre-mRNA complex but not with SLBP alone. Interacts with LSM11 in a U7 snRNP-dependent manner.

The protein resides in the nucleus. In terms of biological role, involved in histone 3'-end pre-mRNA processing by associating with U7 snRNP and interacting with SLBP/pre-mRNA complex. Increases histone 3'-end pre-mRNA processing but has no effect on U7 snRNP levels, when overexpressed. Required for cell cycle progression from G1 to S phases. This Mus musculus (Mouse) protein is Zinc finger protein 473 homolog (Znf473).